The primary structure comprises 205 residues: MTTQYGFFIDSSRCAGCKTCELACKDYKDLTPEVSFRRIYEYAGGDWQEDNGVWHQNVFAYYLSISCNHCEDPACTKVCPSGAMHKREDGFVVVDEDVCIGCRYCHMACPYGAPQYNETKGHMTKCDGCYDRVAEGKKPICVESCPLRALDFGPIDELRKKHGDLAAVAPLPRAHFTKPNIVIKPNANSRPTGDTTGYLANPKEV.

3 consecutive 4Fe-4S ferredoxin-type domains span residues 5 to 33 (YGFF…LTPE), 59 to 89 (FAYY…KRED), and 90 to 119 (GFVV…YNET). [4Fe-4S] cluster is bound by residues Cys-14, Cys-17, Cys-20, Cys-24, Cys-67, Cys-70, Cys-75, Cys-79, Cys-99, Cys-102, Cys-105, Cys-109, Cys-126, Cys-129, Cys-141, and Cys-145. The disordered stretch occupies residues 184–205 (KPNANSRPTGDTTGYLANPKEV). Residues 186 to 195 (NANSRPTGDT) show a composition bias toward polar residues.

Heterotrimeric enzyme composed of a catalytic heterodimer (DmsAB) and a membrane anchor protein (DmsC). It depends on [4Fe-4S] cluster as a cofactor.

Its function is as follows. Electron transfer subunit of the terminal reductase during anaerobic growth on various sulfoxide and N-oxide compounds. The sequence is that of Anaerobic dimethyl sulfoxide reductase chain B (dmsB) from Shigella flexneri.